Consider the following 229-residue polypeptide: Putative N-acetylmannosamine-6-phosphate 2-epimerase (229 aa).

The protein belongs to the NanE family.

It catalyses the reaction an N-acyl-D-glucosamine 6-phosphate = an N-acyl-D-mannosamine 6-phosphate. The protein operates within amino-sugar metabolism; N-acetylneuraminate degradation; D-fructose 6-phosphate from N-acetylneuraminate: step 3/5. Its function is as follows. Converts N-acetylmannosamine-6-phosphate (ManNAc-6-P) to N-acetylglucosamine-6-phosphate (GlcNAc-6-P). This Shigella sonnei (strain Ss046) protein is Putative N-acetylmannosamine-6-phosphate 2-epimerase.